Consider the following 435-residue polypeptide: Arginine biosynthesis bifunctional protein ArgJ, mitochondrial (435 aa).

Substrate contacts are provided by Thr167, Lys193, Thr204, Glu291, Asn430, and Thr435. The Nucleophile role is filled by Thr204.

The protein belongs to the ArgJ family. Heterodimer of an alpha and a beta chain. The alpha and beta chains are autoproteolytically processed from a single precursor protein within the mitochondrion.

It localises to the mitochondrion matrix. It carries out the reaction N(2)-acetyl-L-ornithine + L-glutamate = N-acetyl-L-glutamate + L-ornithine. The catalysed reaction is L-glutamate + acetyl-CoA = N-acetyl-L-glutamate + CoA + H(+). The protein operates within amino-acid biosynthesis; L-arginine biosynthesis; L-ornithine and N-acetyl-L-glutamate from L-glutamate and N(2)-acetyl-L-ornithine (cyclic): step 1/1. Its pathway is amino-acid biosynthesis; L-arginine biosynthesis; N(2)-acetyl-L-ornithine from L-glutamate: step 1/4. Catalyzes two activities which are involved in the cyclic version of arginine biosynthesis: the synthesis of acetylglutamate from glutamate and acetyl-CoA, and of ornithine by transacetylation between acetylornithine and glutamate. The polypeptide is Arginine biosynthesis bifunctional protein ArgJ, mitochondrial (Heterostelium pallidum (strain ATCC 26659 / Pp 5 / PN500) (Cellular slime mold)).